The chain runs to 1231 residues: Cohesin subunit SA-2 (1231 aa).

M1 carries the post-translational modification N-acetylmethionine. Residues 1–75 form a disordered region; it reads MIAAPEIPTD…GSNRMNGHHQ (75 aa). Residues 36–48 show a composition bias toward basic residues; sequence KQGKGKTCKKGKK. Positions 293-378 constitute an SCD domain; that stretch reads FVHRYRDAIA…SRFKDRIVSM (86 aa). K607 carries the N6-acetyllysine modification. 4 positions are modified to phosphoserine: S1058, S1061, S1064, and S1065. The disordered stretch occupies residues 1062–1087; sequence GMSSRGSTVRSKKSKPSTGKRKVVEG. Over residues 1071-1082 the composition is skewed to basic residues; that stretch reads RSKKSKPSTGKR. T1112 carries the phosphothreonine modification. Residues S1177 and S1178 each carry the phosphoserine modification.

Belongs to the SCC3 family. In terms of assembly, interacts directly with RAD21 in cohesin complex. Cohesin complexes are composed of a heterodimer between a SMC1 protein (SMC1A or SMC1B) and SMC3, which are attached via their hinge domain, and RAD21 which link them at their heads, and one STAG protein (STAG1, STAG2 or STAG3). In cohesin complexes, STAG2 is mutually exclusive with STAG1 and STAG3. In terms of processing, phosphorylated by PLK1. The large dissociation of cohesin from chromosome arms during prophase is partly due to its phosphorylation.

It localises to the nucleus. The protein resides in the chromosome. The protein localises to the centromere. Its function is as follows. Component of cohesin complex, a complex required for the cohesion of sister chromatids after DNA replication. The cohesin complex apparently forms a large proteinaceous ring within which sister chromatids can be trapped. At anaphase, the complex is cleaved and dissociates from chromatin, allowing sister chromatids to segregate. The cohesin complex may also play a role in spindle pole assembly during mitosis. The polypeptide is Cohesin subunit SA-2 (Stag2) (Mus musculus (Mouse)).